A 314-amino-acid chain; its full sequence is Putative glycosyltransferase ORF31 (314 aa).

The protein belongs to the glycosyltransferase group 1 family.

The chain is Putative glycosyltransferase ORF31 from Haloarcula hispanica (His1V).